The sequence spans 212 residues: Pyridoxine/pyridoxamine 5'-phosphate oxidase (212 aa).

Substrate contacts are provided by residues 8–11 (RKNY) and Lys-66. FMN contacts are provided by residues 61–66 (RIVLIK), 76–77 (FT), Arg-82, Lys-83, and Gln-105. Positions 123, 127, and 131 each coordinate substrate. Residues 140-141 (QS) and Trp-184 contribute to the FMN site. 190 to 192 (RLH) contributes to the substrate binding site. Arg-194 provides a ligand contact to FMN.

Belongs to the pyridoxamine 5'-phosphate oxidase family. Homodimer. FMN is required as a cofactor.

The enzyme catalyses pyridoxamine 5'-phosphate + O2 + H2O = pyridoxal 5'-phosphate + H2O2 + NH4(+). The catalysed reaction is pyridoxine 5'-phosphate + O2 = pyridoxal 5'-phosphate + H2O2. The protein operates within cofactor metabolism; pyridoxal 5'-phosphate salvage; pyridoxal 5'-phosphate from pyridoxamine 5'-phosphate: step 1/1. It participates in cofactor metabolism; pyridoxal 5'-phosphate salvage; pyridoxal 5'-phosphate from pyridoxine 5'-phosphate: step 1/1. In terms of biological role, catalyzes the oxidation of either pyridoxine 5'-phosphate (PNP) or pyridoxamine 5'-phosphate (PMP) into pyridoxal 5'-phosphate (PLP). This is Pyridoxine/pyridoxamine 5'-phosphate oxidase from Paraburkholderia phymatum (strain DSM 17167 / CIP 108236 / LMG 21445 / STM815) (Burkholderia phymatum).